A 328-amino-acid polypeptide reads, in one-letter code: Mitochondrial thiamine pyrophosphate carrier 1 (328 aa).

3 Solcar repeats span residues 12 to 110, 120 to 208, and 221 to 316; these read GTRR…TTQL, PQPI…LRPV, and PPGS…ALKL. Helical transmembrane passes span 17–37, 79–99, 126–146, 185–205, 227–247, and 291–308; these read VVLA…PLDV, LTGL…YGGI, FISG…LDLL, SAAV…YEAL, AAAG…LDLV, and GLTV…VTMW.

The protein belongs to the mitochondrial carrier (TC 2.A.29) family.

It is found in the mitochondrion inner membrane. Its function is as follows. Mitochondrial transporter that mediates uptake of thiamine pyrophosphate (ThPP) into mitochondria. This is Mitochondrial thiamine pyrophosphate carrier 1 (tpc1) from Emericella nidulans (strain FGSC A4 / ATCC 38163 / CBS 112.46 / NRRL 194 / M139) (Aspergillus nidulans).